The primary structure comprises 255 residues: tRNA (guanine-N(1)-)-methyltransferase (255 aa).

Residues G117 and 137-142 (IGDYVL) contribute to the S-adenosyl-L-methionine site.

It belongs to the RNA methyltransferase TrmD family. In terms of assembly, homodimer.

It localises to the cytoplasm. The catalysed reaction is guanosine(37) in tRNA + S-adenosyl-L-methionine = N(1)-methylguanosine(37) in tRNA + S-adenosyl-L-homocysteine + H(+). Specifically methylates guanosine-37 in various tRNAs. The polypeptide is tRNA (guanine-N(1)-)-methyltransferase (Glaesserella parasuis serovar 5 (strain SH0165) (Haemophilus parasuis)).